A 459-amino-acid polypeptide reads, in one-letter code: MHNIHRRHFLKAAGAVTAGLVTANIALNANASSVAPKPRVGKSVIGLIAPKMELVRVGFIGVGERGFSHVEQFCHLEGVELKAICDTHQAVIDRAVEHIVNQNRPKPAVYTGNDLSYRELLNRDDIDIVIISTPWEWHAPMAIDTMESGKHAFVEVPLALTVEECWQLVDTAERTQKNCMMMENVNYGREELMVLNMVRQGVFGELLHGEAAYIHELRWQMKEIDHKTGSWRTYWHTKRNGNLYPTHGLGPISQYMNINRGDRFDYLTSMSSPALGRALYAKREFPADHERNQLKYINGDMSTSLIKTVKGRTIMVQHDTTTPRPYSRHNLIQGTNGVFAGFPNRIAVEHGGFGKSYHEWDMDMQKWYDKYDHPLWQRIGKEAEINGGHGGMDFVMLWRMVYCLRNGEALDQDVYDGAAWSVVNILSEQSLNNRSNSVNFPDFTRGAWEHATPLGIVGA.

A signal peptide (tat-type signal) is located at residues 1–31; that stretch reads MHNIHRRHFLKAAGAVTAGLVTANIALNANA. Residues 64–65, D86, 135–138, 155–156, and N184 each bind NAD(+); these read ER, WEWH, and EV. Substrate is bound by residues Y213, R232, 244 to 247, and Y326; that span reads YPTH. Y244 contributes to the NAD(+) binding site.

Belongs to the Gfo/Idh/MocA family. Glycosyl hydrolase 109 subfamily. The cofactor is NAD(+). In terms of processing, predicted to be exported by the Tat system. The position of the signal peptide cleavage has not been experimentally proven.

In terms of biological role, glycosidase. The polypeptide is Glycosyl hydrolase family 109 protein 1 (Shewanella sp. (strain MR-7)).